Here is a 219-residue protein sequence, read N- to C-terminus: Phosphatidylserine decarboxylase proenzyme (219 aa).

The active-site Schiff-base intermediate with substrate; via pyruvic acid is the serine 188. Serine 188 is subject to Pyruvic acid (Ser); by autocatalysis.

It belongs to the phosphatidylserine decarboxylase family. PSD-A subfamily. In terms of assembly, heterodimer of a large membrane-associated beta subunit and a small pyruvoyl-containing alpha subunit. Requires pyruvate as cofactor. Is synthesized initially as an inactive proenzyme. Formation of the active enzyme involves a self-maturation process in which the active site pyruvoyl group is generated from an internal serine residue via an autocatalytic post-translational modification. Two non-identical subunits are generated from the proenzyme in this reaction, and the pyruvate is formed at the N-terminus of the alpha chain, which is derived from the carboxyl end of the proenzyme. The post-translation cleavage follows an unusual pathway, termed non-hydrolytic serinolysis, in which the side chain hydroxyl group of the serine supplies its oxygen atom to form the C-terminus of the beta chain, while the remainder of the serine residue undergoes an oxidative deamination to produce ammonia and the pyruvoyl prosthetic group on the alpha chain.

It localises to the cell membrane. The catalysed reaction is a 1,2-diacyl-sn-glycero-3-phospho-L-serine + H(+) = a 1,2-diacyl-sn-glycero-3-phosphoethanolamine + CO2. The protein operates within phospholipid metabolism; phosphatidylethanolamine biosynthesis; phosphatidylethanolamine from CDP-diacylglycerol: step 2/2. Its function is as follows. Catalyzes the formation of phosphatidylethanolamine (PtdEtn) from phosphatidylserine (PtdSer). This chain is Phosphatidylserine decarboxylase proenzyme, found in Ruegeria pomeroyi (strain ATCC 700808 / DSM 15171 / DSS-3) (Silicibacter pomeroyi).